A 146-amino-acid chain; its full sequence is Cystatin-C (146 aa).

A signal peptide spans 1–26 (MAGPLRAPLLLLAILAVALALSPAAG). At serine 43 the chain carries Phosphoserine. A Secondary area of contact motif is present at residues 81–85 (QIVAG). Cystine bridges form between cysteine 99-cysteine 109 and cysteine 123-cysteine 143.

It belongs to the cystatin family.

It is found in the secreted. As an inhibitor of cysteine proteinases, this protein is thought to serve an important physiological role as a local regulator of this enzyme activity. This Saimiri sciureus (Common squirrel monkey) protein is Cystatin-C (CST3).